Here is a 231-residue protein sequence, read N- to C-terminus: DNA mismatch repair protein MutH (231 aa).

Belongs to the MutH family.

The protein resides in the cytoplasm. Sequence-specific endonuclease that cleaves unmethylated GATC sequences. It is involved in DNA mismatch repair. This is DNA mismatch repair protein MutH from Salmonella enteritidis PT4 (strain P125109).